A 380-amino-acid polypeptide reads, in one-letter code: Flap endonuclease 1 (380 aa).

An N-domain region spans residues 1-104 (MGIKGLSQLI…GELTKRAEKR (104 aa)). Residue D34 participates in Mg(2+) binding. DNA-binding residues include R47 and R70. Mg(2+) is bound by residues D86, E158, E160, D179, and D181. The I-domain stretch occupies residues 122-253 (DIDKFNRRLV…KKAVELINKH (132 aa)). E158 serves as a coordination point for DNA. The DNA site is built by G231 and D233. D233 lines the Mg(2+) pocket. The segment at 336–344 (TQGRLDSFF) is interaction with PCNA. Residues 342–380 (SFFKVLPSTPNPKRKIEDKKTPASKKAKTTGGKPGRKPK) form a disordered region. Basic residues predominate over residues 363-380 (PASKKAKTTGGKPGRKPK).

Belongs to the XPG/RAD2 endonuclease family. FEN1 subfamily. In terms of assembly, interacts with PCNA. Three molecules of FEN1 bind to one PCNA trimer with each molecule binding to one PCNA monomer. PCNA stimulates the nuclease activity without altering cleavage specificity. Requires Mg(2+) as cofactor. Post-translationally, phosphorylated. Phosphorylation upon DNA damage induces relocalization to the nuclear plasma.

It localises to the nucleus. It is found in the nucleolus. The protein resides in the nucleoplasm. Its subcellular location is the mitochondrion. Functionally, structure-specific nuclease with 5'-flap endonuclease and 5'-3' exonuclease activities involved in DNA replication and repair. During DNA replication, cleaves the 5'-overhanging flap structure that is generated by displacement synthesis when DNA polymerase encounters the 5'-end of a downstream Okazaki fragment. It enters the flap from the 5'-end and then tracks to cleave the flap base, leaving a nick for ligation. Also involved in the long patch base excision repair (LP-BER) pathway, by cleaving within the apurinic/apyrimidinic (AP) site-terminated flap. Acts as a genome stabilization factor that prevents flaps from equilibrating into structures that lead to duplications and deletions. Also possesses 5'-3' exonuclease activity on nicked or gapped double-stranded DNA, and exhibits RNase H activity. Also involved in replication and repair of rDNA and in repairing mitochondrial DNA. This Aedes aegypti (Yellowfever mosquito) protein is Flap endonuclease 1.